A 386-amino-acid polypeptide reads, in one-letter code: Bifunctional enzyme IspD/IspF (386 aa).

A 2-C-methyl-D-erythritol 4-phosphate cytidylyltransferase region spans residues 1–230 (MIRDERVAAI…RARSILEAPV (230 aa)). The interval 231-386 (AMGVGYDTHR…HAVALLVRVR (156 aa)) is 2-C-methyl-D-erythritol 2,4-cyclodiphosphate synthase. A divalent metal cation contacts are provided by D237 and H239. Residues 237–239 (DTH) and 262–263 (HS) each bind 4-CDP-2-C-methyl-D-erythritol 2-phosphate. An a divalent metal cation-binding site is contributed by H270. 4-CDP-2-C-methyl-D-erythritol 2-phosphate contacts are provided by residues 284–286 (DLG), 289–293 (FPDTD), 360–363 (TTGE), F367, and R370.

This sequence in the N-terminal section; belongs to the IspD/TarI cytidylyltransferase family. IspD subfamily. It in the C-terminal section; belongs to the IspF family. The cofactor is a divalent metal cation.

The catalysed reaction is 2-C-methyl-D-erythritol 4-phosphate + CTP + H(+) = 4-CDP-2-C-methyl-D-erythritol + diphosphate. The enzyme catalyses 4-CDP-2-C-methyl-D-erythritol 2-phosphate = 2-C-methyl-D-erythritol 2,4-cyclic diphosphate + CMP. Its pathway is isoprenoid biosynthesis; isopentenyl diphosphate biosynthesis via DXP pathway; isopentenyl diphosphate from 1-deoxy-D-xylulose 5-phosphate: step 2/6. It functions in the pathway isoprenoid biosynthesis; isopentenyl diphosphate biosynthesis via DXP pathway; isopentenyl diphosphate from 1-deoxy-D-xylulose 5-phosphate: step 4/6. In terms of biological role, bifunctional enzyme that catalyzes the formation of 4-diphosphocytidyl-2-C-methyl-D-erythritol from CTP and 2-C-methyl-D-erythritol 4-phosphate (MEP) (IspD), and catalyzes the conversion of 4-diphosphocytidyl-2-C-methyl-D-erythritol 2-phosphate (CDP-ME2P) to 2-C-methyl-D-erythritol 2,4-cyclodiphosphate (ME-CPP) with a corresponding release of cytidine 5-monophosphate (CMP) (IspF). The sequence is that of Bifunctional enzyme IspD/IspF from Anaeromyxobacter sp. (strain Fw109-5).